Reading from the N-terminus, the 585-residue chain is tRNA-guanine(15) transglycosylase (585 aa).

Aspartate 95 acts as the Nucleophile in catalysis. 2 residues coordinate substrate: aspartate 130 and alanine 196. Cysteine 279, cysteine 281, and cysteine 284 together coordinate Zn(2+). The 76-residue stretch at 507-582 folds into the PUA domain; the sequence is VMRVVVNKEA…RAVKTRRGVE (76 aa).

The protein belongs to the archaeosine tRNA-ribosyltransferase family. It depends on Zn(2+) as a cofactor.

The catalysed reaction is guanosine(15) in tRNA + 7-cyano-7-deazaguanine = 7-cyano-7-carbaguanosine(15) in tRNA + guanine. Its pathway is tRNA modification; archaeosine-tRNA biosynthesis. Its function is as follows. Exchanges the guanine residue with 7-cyano-7-deazaguanine (preQ0) at position 15 in the dihydrouridine loop (D-loop) of archaeal tRNAs. This Pyrococcus furiosus (strain ATCC 43587 / DSM 3638 / JCM 8422 / Vc1) protein is tRNA-guanine(15) transglycosylase.